We begin with the raw amino-acid sequence, 672 residues long: tRNA 5-methylaminomethyl-2-thiouridine biosynthesis bifunctional protein MnmC (672 aa).

A tRNA (mnm(5)s(2)U34)-methyltransferase region spans residues 1–235 (MTRVLEPAEP…KRDMTVARFA (235 aa)). An FAD-dependent cmnm(5)s(2)U34 oxidoreductase region spans residues 259–672 (IGAGLAGCAV…SAGPGVDAAG (414 aa)).

The protein in the N-terminal section; belongs to the methyltransferase superfamily. tRNA (mnm(5)s(2)U34)-methyltransferase family. It in the C-terminal section; belongs to the DAO family. FAD serves as cofactor.

The protein resides in the cytoplasm. The catalysed reaction is 5-aminomethyl-2-thiouridine(34) in tRNA + S-adenosyl-L-methionine = 5-methylaminomethyl-2-thiouridine(34) in tRNA + S-adenosyl-L-homocysteine + H(+). In terms of biological role, catalyzes the last two steps in the biosynthesis of 5-methylaminomethyl-2-thiouridine (mnm(5)s(2)U) at the wobble position (U34) in tRNA. Catalyzes the FAD-dependent demodification of cmnm(5)s(2)U34 to nm(5)s(2)U34, followed by the transfer of a methyl group from S-adenosyl-L-methionine to nm(5)s(2)U34, to form mnm(5)s(2)U34. The polypeptide is tRNA 5-methylaminomethyl-2-thiouridine biosynthesis bifunctional protein MnmC (Cupriavidus metallidurans (strain ATCC 43123 / DSM 2839 / NBRC 102507 / CH34) (Ralstonia metallidurans)).